The following is a 365-amino-acid chain: Flagellar P-ring protein (365 aa).

Residues 1 to 19 (MMLSLCAIAGLLLAPSIQA) form the signal peptide.

This sequence belongs to the FlgI family. The basal body constitutes a major portion of the flagellar organelle and consists of four rings (L,P,S, and M) mounted on a central rod.

Its subcellular location is the periplasm. It localises to the bacterial flagellum basal body. Assembles around the rod to form the L-ring and probably protects the motor/basal body from shearing forces during rotation. The sequence is that of Flagellar P-ring protein from Sodalis glossinidius (strain morsitans).